Consider the following 145-residue polypeptide: Putative BCoR-like protein 2 (145 aa).

The span at 1–27 shows a compositional bias: basic and acidic residues; the sequence is MKEKLSKKRAEVKGNRSWLEEFLKPSD. The segment at 1–58 is disordered; the sequence is MKEKLSKKRAEVKGNRSWLEEFLKPSDNEEGPPPKNKVLSNNASSQKPTHSSCIPLLR. Residues 38 to 52 show a composition bias toward polar residues; it reads VLSNNASSQKPTHSS.

This sequence belongs to the BCOR family.

The polypeptide is Putative BCoR-like protein 2 (BCORP1) (Homo sapiens (Human)).